Here is a 111-residue protein sequence, read N- to C-terminus: Phosphoribosyl-ATP pyrophosphatase (111 aa).

It belongs to the PRA-PH family.

It is found in the cytoplasm. It catalyses the reaction 1-(5-phospho-beta-D-ribosyl)-ATP + H2O = 1-(5-phospho-beta-D-ribosyl)-5'-AMP + diphosphate + H(+). Its pathway is amino-acid biosynthesis; L-histidine biosynthesis; L-histidine from 5-phospho-alpha-D-ribose 1-diphosphate: step 2/9. The chain is Phosphoribosyl-ATP pyrophosphatase from Pseudomonas putida (strain ATCC 700007 / DSM 6899 / JCM 31910 / BCRC 17059 / LMG 24140 / F1).